Reading from the N-terminus, the 297-residue chain is E3 ubiquitin-protein ligase TRIM52 (297 aa).

The RING-type; degenerate zinc-finger motif lies at 20-62 (CAICLDYFKDPVSISCGHNFCRGCVTQLWSKEDEEDQNEEEDE). The tract at residues 72 to 167 (VGAMDGWDGS…DEDEDEELYP (96 aa)) is important for rapid proteolytic degradation by the proteasome. Residues 222-263 (NDQGMCFKHQEALKLFCEVDKEAICVVCRESRSHKQHSVLPL) form a B box-type zinc finger. Zn(2+) is bound by residues cysteine 227, histidine 230, cysteine 249, and histidine 255.

This sequence belongs to the TRIM/RBCC family. As to quaternary structure, (Microbial infection) Interacts with Japanese encephalitis virus non-structural protein 2 (NS2A); mediates the ubiquitination of NS2A, targeting it for proteasome-mediated degradation. Autoubiquitinated. Polyubiquitinated. Undergoes extremely rapid proteolytic degradation by the proteasome.

It is found in the cytoplasm. Its subcellular location is the cytosol. The protein localises to the nucleus. It catalyses the reaction S-ubiquitinyl-[E2 ubiquitin-conjugating enzyme]-L-cysteine + [acceptor protein]-L-lysine = [E2 ubiquitin-conjugating enzyme]-L-cysteine + N(6)-ubiquitinyl-[acceptor protein]-L-lysine.. The protein operates within protein modification; protein ubiquitination. Functionally, E3 ubiquitin-protein ligase. Positively regulates the NF-kappa-B signaling pathway. In terms of biological role, (Microbial infection) Exhibits antiviral activity against Japanese encephalitis virus (JEV). Ubiquitinates the viral non-structural protein 2 (NS2A) and targets it for proteasome-mediated degradation. This is E3 ubiquitin-protein ligase TRIM52 (TRIM52) from Homo sapiens (Human).